Consider the following 414-residue polypeptide: Cytochrome c biogenesis protein Ccs1 (414 aa).

The next 3 membrane-spanning stretches (helical) occupy residues 14 to 34 (LTVAIIILLAIALASALGTVI), 73 to 93 (SWWFIFLIILLLLSLTLCTIT), and 159 to 179 (VSPIIVHFSLVIVLIGSMLST).

Belongs to the Ccs1/CcsB family. In terms of assembly, may interact with CcsA.

Its subcellular location is the plastid. The protein localises to the chloroplast thylakoid membrane. Functionally, required during biogenesis of c-type cytochromes (cytochrome c6 and cytochrome f) at the step of heme attachment. In Guillardia theta (Cryptophyte), this protein is Cytochrome c biogenesis protein Ccs1.